The sequence spans 503 residues: Glutamate--tRNA ligase (503 aa).

Positions 15 to 25 (PSPTGYLHVGG) match the 'HIGH' region motif. The 'KMSKS' region signature appears at 262–266 (KLSKR). K265 serves as a coordination point for ATP.

The protein belongs to the class-I aminoacyl-tRNA synthetase family. Glutamate--tRNA ligase type 1 subfamily. In terms of assembly, monomer.

The protein localises to the cytoplasm. It carries out the reaction tRNA(Glu) + L-glutamate + ATP = L-glutamyl-tRNA(Glu) + AMP + diphosphate. Its function is as follows. Catalyzes the attachment of glutamate to tRNA(Glu) in a two-step reaction: glutamate is first activated by ATP to form Glu-AMP and then transferred to the acceptor end of tRNA(Glu). The protein is Glutamate--tRNA ligase of Prosthecochloris aestuarii (strain DSM 271 / SK 413).